A 571-amino-acid chain; its full sequence is Protein tesmin/TSO1-like CXC 6 (571 aa).

5 disordered regions span residues 1 to 52 (MGEG…AAAS), 92 to 119 (IRHPRPESPNSMPRPAGETRDGTPQKKK), 293 to 325 (NQGTKDSSTHRLGQANNGRTTSSQTGSRAGGNA), 370 to 411 (LANQ…RSLS), and 507 to 571 (NGVS…KKDL). Basic and acidic residues predominate over residues 7–16 (GDKFPPKTDE). The 125-residue stretch at 117 to 241 (KKKQCNCKHS…KCLDCKNFEG (125 aa)) folds into the CRC domain. Composition is skewed to polar residues over residues 293 to 319 (NQGTKDSSTHRLGQANNGRTTSSQTGS), 373 to 388 (QKETSVASSVQDQGHV), and 508 to 539 (GVSQTAKQPSQLNTTTPNTSSQTANGVSQTAK). Residues 540–557 (QPSQLTTTTTTPNTSSQT) are compositionally biased toward low complexity.

It belongs to the lin-54 family. Ubiquitous but expressed mostly in flowers.

Its subcellular location is the nucleus. Functionally, plays a role in development of both male and female reproductive tissues. In Arabidopsis thaliana (Mouse-ear cress), this protein is Protein tesmin/TSO1-like CXC 6 (TCX6).